The sequence spans 341 residues: HTH-type transcriptional repressor PurR (341 aa).

The region spanning 2 to 56 is the HTH lacI-type domain; sequence ATIKDVAKHAGVSTTTVSHVINKTRFVAENTKAAVWAAIKELHYSPSAVARSLKV. Residues 4 to 23 constitute a DNA-binding region (H-T-H motif); sequence IKDVAKHAGVSTTTVSHVIN. Residues 48-56 mediate DNA binding; it reads SAVARSLKV. Positions 73, 190, 192, 221, and 275 each coordinate hypoxanthine.

As to quaternary structure, homodimer.

Its pathway is purine metabolism; purine nucleotide biosynthesis [regulation]. Functionally, is the main repressor of the genes involved in the de novo synthesis of purine nucleotides, regulating purB, purC, purEK, purF, purHD, purL, purMN and guaBA expression. PurR is allosterically activated to bind its cognate DNA by binding the purine corepressors, hypoxanthine or guanine, thereby effecting transcription repression. The chain is HTH-type transcriptional repressor PurR from Yersinia enterocolitica serotype O:8 / biotype 1B (strain NCTC 13174 / 8081).